Here is a 196-residue protein sequence, read N- to C-terminus: Nucleoid occlusion factor SlmA (196 aa).

The HTH tetR-type domain maps to 7-68; that stretch reads INRREEILQA…GLIEFIEESL (62 aa). The H-T-H motif DNA-binding region spans 31 to 50; sequence TTAKLAKQVGVSEAALYRHF. Positions 110-139 form a coiled coil; that stretch reads HALMFENERLRDRINQLFERIETSLRQILR.

This sequence belongs to the nucleoid occlusion factor SlmA family. Homodimer. Interacts with FtsZ.

It localises to the cytoplasm. The protein localises to the nucleoid. Functionally, required for nucleoid occlusion (NO) phenomenon, which prevents Z-ring formation and cell division over the nucleoid. Acts as a DNA-associated cell division inhibitor that binds simultaneously chromosomal DNA and FtsZ, and disrupts the assembly of FtsZ polymers. SlmA-DNA-binding sequences (SBS) are dispersed on non-Ter regions of the chromosome, preventing FtsZ polymerization at these regions. The polypeptide is Nucleoid occlusion factor SlmA (Vibrio cholerae serotype O1 (strain ATCC 39315 / El Tor Inaba N16961)).